Here is a 250-residue protein sequence, read N- to C-terminus: MSSNSIALAVIGGTGVYKLAQLDQVQTHEVDTPYGAPSGPIRVGMLLGHRVAFLARHGEGHSLPPHKVNYRANIAALQQIGATRVLALNTVGGITDSFGPRVLACPDQLIDYTWGRISTFCEEAGSEVQHVDFGHPYSPMFRSKVIAAAKVTGVTLVAGGCYGATQGPRLETIAEIARMRRDGCDLVGMTGMPEAALAREKGLEYACLAIVANWAAGCGDAQEITMAEVLSNVDAASSGLPELIGELARG.

Residues Thr14 and 56-57 (RH) each bind phosphate. Met189 provides a ligand contact to substrate. Thr190 lines the phosphate pocket. Residue 213–215 (NWA) participates in substrate binding.

It belongs to the PNP/MTAP phosphorylase family. MTAP subfamily. In terms of assembly, homotrimer.

It carries out the reaction S-methyl-5'-thioinosine + phosphate = 5-(methylsulfanyl)-alpha-D-ribose 1-phosphate + hypoxanthine. It participates in purine metabolism; purine nucleoside salvage. Its function is as follows. Catalyzes the reversible phosphorylation of S-methyl-5'-thioinosine (MTI) to hypoxanthine and 5-methylthioribose-1-phosphate. Involved in the breakdown of S-methyl-5'-thioadenosine (MTA), a major by-product of polyamine biosynthesis. Catabolism of (MTA) occurs via deamination to MTI and phosphorolysis to hypoxanthine. The sequence is that of Probable S-methyl-5'-thioinosine phosphorylase from Xanthomonas campestris pv. campestris (strain ATCC 33913 / DSM 3586 / NCPPB 528 / LMG 568 / P 25).